Reading from the N-terminus, the 210-residue chain is Uracil phosphoribosyltransferase (210 aa).

Residues arginine 80, arginine 105, and 132–140 (DPMLATGGS) contribute to the 5-phospho-alpha-D-ribose 1-diphosphate site. Uracil contacts are provided by residues isoleucine 195 and 200–202 (GDA). Residue aspartate 201 coordinates 5-phospho-alpha-D-ribose 1-diphosphate.

Belongs to the UPRTase family. Mg(2+) serves as cofactor.

It catalyses the reaction UMP + diphosphate = 5-phospho-alpha-D-ribose 1-diphosphate + uracil. Its pathway is pyrimidine metabolism; UMP biosynthesis via salvage pathway; UMP from uracil: step 1/1. With respect to regulation, allosterically activated by GTP. Catalyzes the conversion of uracil and 5-phospho-alpha-D-ribose 1-diphosphate (PRPP) to UMP and diphosphate. The polypeptide is Uracil phosphoribosyltransferase (Deinococcus radiodurans (strain ATCC 13939 / DSM 20539 / JCM 16871 / CCUG 27074 / LMG 4051 / NBRC 15346 / NCIMB 9279 / VKM B-1422 / R1)).